The following is a 147-amino-acid chain: Hemoglobin subunit beta (147 aa).

A Globin domain is found at 3-147; it reads HWTAEEKQLI…VAHALARKYH (145 aa). Heme b contacts are provided by His64 and His93.

This sequence belongs to the globin family. As to quaternary structure, heterotetramer of 2 alpha (or alpha-D) and 2 beta chains. In terms of tissue distribution, red blood cells.

Functionally, involved in oxygen transport from the lung to the various peripheral tissues. The beta chain is a component of adult hemoglobin A and D. The polypeptide is Hemoglobin subunit beta (HBB) (Gallus gallus (Chicken)).